The sequence spans 440 residues: L-seryl-tRNA(Sec) selenium transferase (440 aa).

The residue at position 282 (K282) is an N6-(pyridoxal phosphate)lysine.

It belongs to the SelA family. Requires pyridoxal 5'-phosphate as cofactor.

The protein localises to the cytoplasm. It carries out the reaction L-seryl-tRNA(Sec) + selenophosphate + H(+) = L-selenocysteinyl-tRNA(Sec) + phosphate. It participates in aminoacyl-tRNA biosynthesis; selenocysteinyl-tRNA(Sec) biosynthesis; selenocysteinyl-tRNA(Sec) from L-seryl-tRNA(Sec) (bacterial route): step 1/1. In terms of biological role, converts seryl-tRNA(Sec) to selenocysteinyl-tRNA(Sec) required for selenoprotein biosynthesis. This chain is L-seryl-tRNA(Sec) selenium transferase, found in Campylobacter jejuni subsp. jejuni serotype O:2 (strain ATCC 700819 / NCTC 11168).